Here is a 279-residue protein sequence, read N- to C-terminus: Protein FAM151B (279 aa).

This sequence belongs to the menorin family.

Functionally, essential for survival of retinal photoreceptor cells. This is Protein FAM151B (Fam151b) from Mus musculus (Mouse).